Consider the following 488-residue polypeptide: MQPTGPEGPRALSLRPLGHRLSLLGVLLIIPSLWVTCNQTTPSLSSAPTSPGASSAMTTPGIPNDTTTSGVTSDPRLREQALALMRDFPLVDGHNDLPLLLRELFQNKLQDVNLHNFTRGQTSLDRLRDGLVGAQFWSAYIPCQTQDRDAVRVALEQIDLIRRMCSAYPELELVTSADGLNSTQKLACLIGLEGGHSLDTSLAVLRSFYELGVRYLTLTFTCSTPWAESATKFRHHFYTNISGLTSFGEKVVEEMNRIGMMIDLSHASDTLVKQTLEASRAPVIFSHSAARSVCDNLLNVPDDILQLLKKNGGIVMVTLSMGVLQCSLLANVSTVADHFDHIRTVIGSEFIGIGGSYDGSGRFPQGLEDVSTYPVLLEELLRRGWGEQELQGVLRGNLLRVFRQVEQVREKSLGQSPVEVVFPERQQSSTCHSHLLPQSQDAHLKVTKLPSSQVLQRASKAPPCPLLGLVAAVTSPAFTLWLCCSGHR.

A signal peptide spans 1 to 35 (MQPTGPEGPRALSLRPLGHRLSLLGVLLIIPSLWV). Low complexity predominate over residues 41–60 (TPSLSSAPTSPGASSAMTTP). Residues 41–74 (TPSLSSAPTSPGASSAMTTPGIPNDTTTSGVTSD) form a disordered region. 2 disulfides stabilise this stretch: C143–C222 and C294–C326. N331 carries an N-linked (GlcNAc...) asparagine glycan. S459 carries GPI-anchor amidated serine lipidation. A propeptide spans 460-487 (KAPPCPLLGLVAAVTSPAFTLWLCCSGH) (removed in mature form).

This sequence belongs to the metallo-dependent hydrolases superfamily. Peptidase M19 family. In terms of assembly, homodimer; disulfide-linked. Interacts with TEX101; co-localized on the cell surface of spermatocytes, spermatids, and testicular spermatozoa, co-localized only in cytoplasmic droplets of caput and corpus epididymal sperm.

The protein resides in the membrane. Lacks dipeptidase activity and is unable to hydrolyze cystinyl-bis-glycine, leukotriene D4 and the beta-lactam antibiotic imipenem. The absence of activity may be due to the inability of serine (instead of aspartate found in DPEP1/2) at position 356 to function as the acid/base catalyst and activate the nucleophilic water/hydroxide. The sequence is that of Dipeptidase 3 (Dpep3) from Rattus norvegicus (Rat).